Consider the following 199-residue polypeptide: Small ribosomal subunit protein uS4 (199 aa).

One can recognise an S4 RNA-binding domain in the interval 94–157; that stretch reads SRLDNIVYRM…QNVPTILASI (64 aa).

This sequence belongs to the universal ribosomal protein uS4 family. In terms of assembly, part of the 30S ribosomal subunit. Contacts protein S5. The interaction surface between S4 and S5 is involved in control of translational fidelity.

Its function is as follows. One of the primary rRNA binding proteins, it binds directly to 16S rRNA where it nucleates assembly of the body of the 30S subunit. In terms of biological role, with S5 and S12 plays an important role in translational accuracy. The polypeptide is Small ribosomal subunit protein uS4 (Mycoplasma mobile (strain ATCC 43663 / 163K / NCTC 11711) (Mesomycoplasma mobile)).